The chain runs to 199 residues: Ribonuclease HI (199 aa).

The segment at Met-1–Gly-68 is not required for RNase H activity. The region spanning Arg-66–Asp-197 is the RNase H type-1 domain. The interval Arg-69–Ala-199 is as active as intact RNase H. 4 residues coordinate Mg(2+): Asp-75, Glu-115, Asp-139, and Asp-189. Positions 75, 115, 139, and 189 each coordinate Mn(2+).

It belongs to the RNase H family. The cofactor is Mn(2+). Requires Mg(2+) as cofactor. Co(2+) serves as cofactor. Ni(2+) is required as a cofactor.

The protein localises to the cytoplasm. The enzyme catalyses Endonucleolytic cleavage to 5'-phosphomonoester.. Its function is as follows. Nuclease that specifically degrades the RNA of RNA-DNA hybrids; seems to act exonucleolytically on RNA/DNA hybrids. Endonucleolytically removes RNA primers from the Okazaki fragments of lagging strand synthesis on its own. Complements the temperature-sensitive phenotype of an E.coli double rnhA/rnhB (RNase H) disruption mutant. The chain is Ribonuclease HI (rnhA) from Halobacterium salinarum (strain ATCC 700922 / JCM 11081 / NRC-1) (Halobacterium halobium).